A 77-amino-acid polypeptide reads, in one-letter code: Conodipine-M alpha chain (77 aa).

Position 1 is a pyrrolidone carboxylic acid (Gln-1). His-36 is a catalytic residue.

Heterodimer of an alpha and a beta chains; probably disulfide-linked. Ca(2+) serves as cofactor. Expressed by the venom duct.

Its subcellular location is the secreted. The enzyme catalyses a 1,2-diacyl-sn-glycero-3-phosphocholine + H2O = a 1-acyl-sn-glycero-3-phosphocholine + a fatty acid + H(+). Its activity is regulated as follows. Inhibited by linoleoyl amide and MG14. Functionally, heterodimer: conodipine-M catalyzes the calcium-dependent hydrolysis of the 2-acyl groups in 3-sn-phosphoglycerides. This activity may be supported by the alpha chain. Conodipine-M inhibits the binding of isradipine (a ligand specific for L-type calcium channel) to L-type calcium channels. The chain is Conodipine-M alpha chain from Conus magus (Magical cone).